Reading from the N-terminus, the 417-residue chain is Phosphoglycerate kinase (417 aa).

Positions 23, 24, 25, 26, 38, 39, 62, 63, 65, 66, 121, 122, 169, and 170 each coordinate (2R)-3-phosphoglycerate. Residue glycine 213 coordinates ADP. Glycine 213 is a CDP binding site. AMP-binding residues include alanine 214 and lysine 215. Alanine 214 serves as a coordination point for ATP. Alanine 214 contacts Mg(2+). Residue aspartate 218 participates in CDP binding. Residue aspartate 218 participates in Mg(2+) binding. Lysine 219 lines the AMP pocket. Lysine 219 is a binding site for ATP. Position 237 (glycine 237) interacts with ADP. Glycine 237 serves as a coordination point for CDP. AMP contacts are provided by glycine 238 and glycine 312. Positions 238 and 312 each coordinate ATP. CDP-binding residues include glycine 337 and phenylalanine 342. Phenylalanine 342 contacts ADP. Glutamate 343 provides a ligand contact to AMP. Residues glutamate 343, aspartate 374, and threonine 375 each contribute to the ATP site. Position 374 (aspartate 374) interacts with Mg(2+).

Belongs to the phosphoglycerate kinase family. In terms of assembly, monomer. Mg(2+) serves as cofactor.

It localises to the cytoplasm. The protein resides in the mitochondrion. It catalyses the reaction (2R)-3-phosphoglycerate + ATP = (2R)-3-phospho-glyceroyl phosphate + ADP. The protein operates within carbohydrate degradation; glycolysis; pyruvate from D-glyceraldehyde 3-phosphate: step 2/5. Functionally, catalyzes one of the two ATP producing reactions in the glycolytic pathway via the reversible conversion of 1,3-diphosphoglycerate to 3-phosphoglycerate. Both L- and D- forms of purine and pyrimidine nucleotides can be used as substrates, but the activity is much lower on pyrimidines. Negatively regulates the biosynthesis of acetyl-CoA from pyruvate in the mitochondrion. This is Phosphoglycerate kinase (PGK1) from Yarrowia lipolytica (strain CLIB 122 / E 150) (Yeast).